We begin with the raw amino-acid sequence, 404 residues long: Corticosteroid-binding globulin (404 aa).

Positions 1 to 22 (MLPTLYTCLLWLSTSGLWTVQA) are cleaved as a signal peptide. Residues Asn-95, Asn-119, and Asn-175 are each glycosylated (N-linked (GlcNAc...) asparagine). Cortisol is bound at residue Gln-253. Residue Asn-259 is glycosylated (N-linked (GlcNAc...) asparagine). Gln-285 serves as a coordination point for cortisol. A glycan (N-linked (GlcNAc...) asparagine) is linked at Asn-326. Trp-392 provides a ligand contact to cortisol.

This sequence belongs to the serpin family. Post-translationally, glycosylation in position Asn-259 is needed for steroid binding.

It localises to the secreted. Major transport protein for glucocorticoids and progestins in the blood of almost all vertebrate species. This chain is Corticosteroid-binding globulin (SERPINA6), found in Bos taurus (Bovine).